The primary structure comprises 1117 residues: MQKINNINNNKQMLTRKEDLLTVLKQISALKYVSNLYEFLLATEKIVQTSELDTQFQEFLTTTIIASEQNLVENYKQKYNQPNFSQLTIKQVIDDSIILLGNKQNYVQQIGTTTIGFYVEYENINLSRQTLYSSNFRNLLNIFGEEDFKYFLIDFLVFTKVEQNGYLQVAGVCLNQYFSVQVKQKKWYKNNFNMNGKATSNNNQNNANLSNEKKQENQYIYPEIQRSQIFYCNHMGREPGVFKSSFFNYSEIKKGFQFKVIQEKLQGRQFINSDKIKPDHPQTIIKKTLLKEYQSKNFSCQEERDLFLEFTEKIVQNFHNINFNYLLKKFCKLPENYQSLKSQVKQIVQSENKANQQSCENLFNSLYDTEISYKQITNFLRQIIQNCVPNQLLGKKNFKVFLEKLYEFVQMKRFENQKVLDYICFMDVFDVEWFVDLKNQKFTQKRKYISDKRKILGDLIVFIINKIVIPVLRYNFYITEKHKEGSQIFYYRKPIWKLVSKLTIVKLEEENLEKVEEKLIPEDSFQKYPQGKLRIIPKKGSFRPIMTFLRKDKQKNIKLNLNQILMDSQLVFRNLKDMLGQKIGYSVFDNKQISEKFAQFIEKWKNKGRPQLYYVTLDIKKCYDSIDQMKLLNFFNQSDLIQDTYFINKYLLFQRNKRPLLQIQQTNNLNSAMEIEEEKINKKPFKMDNINFPYYFNLKERQIAYSLYDDDDQILQKGFKEIQSDDRPFIVINQDKPRCITKDIIHNHLKHISQYNVISFNKVKFRQKRGIPQGLNISGVLCSFYFGKLEEEYTQFLKNAEQVNGSINLLMRLTDDYLFISDSQQNALNLIVQLQNCANNNGFMFNDQKITTNFQFPQEDYNLEHFKISVQNECQWIGKSIDMNTLEIKSIQKQTQQEINQTINVAISIKNLKSQLKNKLRSLFLNQLIDYFNPNINSFEGLCRQLYHHSKATVMKFYPFMTKLFQIDLKKSKQYSVQYGKENTNENFLKDILYYTVEDVCKILCYLQFEDEINSNIKEIFKNLYSWIMWDIIVSYLKKKKQFKGYLNKLLQKIRKSRFFYLKEGCKSLQLILSQQKYQLNKKELEAIEFIDLNNLIQDIKTLIPKISAKSNQQNTN.

Positions 1-191 (MQKINNINNN…VKQKKWYKNN (191 aa)) are TEN. Residues 217 to 519 (NQYIYPEIQR…ENLEKVEEKL (303 aa)) form an RBD region. The 365-residue stretch at 517-881 (EKLIPEDSFQ…NECQWIGKSI (365 aa)) folds into the Reverse transcriptase domain. The tract at residues 520–887 (IPEDSFQKYP…GKSIDMNTLE (368 aa)) is RT. Asp618 lines the Mg(2+) pocket. Positions 638-742 (SDLIQDTYFI…NQDKPRCITK (105 aa)) are TRAP. 2 residues coordinate Mg(2+): Asp815 and Asp816. The tract at residues 888-1117 (IKSIQKQTQQ…SAKSNQQNTN (230 aa)) is CTE.

Belongs to the reverse transcriptase family. Telomerase subfamily. Component of the telomerase holoenzyme complex, composed of the catalytic core (the catalytic subunit TERT, the telomerase RNA template component TER and TAP65/p65), which is associated with two heterotrimeric subcomplexes: (i) the replication protein A (RPA)-related subcomplex, composed of TEB1, RPA2/TEB2 and RPA3/TEB3 and (ii) the CST-like subcomplex, composed of TAP75/p75, TAP45/p45 and TAP19/p19. TEB1 and the CST-like subcomplex are tethered to the catalytic core by TAP50/p50.

The protein localises to the nucleus. The protein resides in the chromosome. It localises to the telomere. The catalysed reaction is DNA(n) + a 2'-deoxyribonucleoside 5'-triphosphate = DNA(n+1) + diphosphate. Functionally, catalytic component of telomerase, an essential ribonucleoprotein enzyme that copies new telomeric repeats onto chromosome ends by repetitively synthesizing the short telomere-repeat sequence 5'-TTGGGG-3' using an RNA template component TER. TERT is a reverse transcriptase that adds simple sequence repeats to chromosome ends by copying a template sequence within the RNA component of the enzyme. This is Telomerase reverse transcriptase from Tetrahymena thermophila (strain SB210).